The chain runs to 187 residues: Elongation factor P (187 aa).

The protein belongs to the elongation factor P family.

Its subcellular location is the cytoplasm. Its pathway is protein biosynthesis; polypeptide chain elongation. Its function is as follows. Involved in peptide bond synthesis. Stimulates efficient translation and peptide-bond synthesis on native or reconstituted 70S ribosomes in vitro. Probably functions indirectly by altering the affinity of the ribosome for aminoacyl-tRNA, thus increasing their reactivity as acceptors for peptidyl transferase. The protein is Elongation factor P of Gloeobacter violaceus (strain ATCC 29082 / PCC 7421).